Reading from the N-terminus, the 518-residue chain is Calcium and calcium/calmodulin-dependent serine/threonine-protein kinase (518 aa).

The Protein kinase domain maps to 13–300 (YEISEILGRG…AQELLSHPWV (288 aa)). Residues 19 to 27 (LGRGGFSVV) and Lys-44 each bind ATP. Asp-165 (proton acceptor) is an active-site residue. Thr-265 bears the Phosphothreonine mark. Positions 323–336 (ARRKLRAAAIASVW) are calmodulin-binding. A coiled-coil region spans residues 344–365 (TKKLRSLVGTYDLKEEEIESLR). EF-hand domains lie at 394-429 (SLIP…LKNS), 430-465 (KGDD…LPEE), and 472-507 (TEPG…DSSL). Ca(2+) is bound by residues Asp-407, Asn-409, Asp-411, Thr-413, Glu-418, Asp-443, Asp-445, Ser-447, Cys-449, Glu-454, Asp-485, Asn-487, Asp-489, Lys-491, and Glu-496.

Belongs to the protein kinase superfamily. CAMK Ser/Thr protein kinase family. CaMK subfamily. As to quaternary structure, interacts with IPD3. Interacts with CIP73. In terms of processing, autophosphorylation stimulated by calcium. Occurs probably by an intermolecular mechanism. As to expression, mainly expressed in roots and nodules. Detected in leaves, stems and cotyledons.

The protein resides in the nucleus. The catalysed reaction is L-seryl-[protein] + ATP = O-phospho-L-seryl-[protein] + ADP + H(+). It carries out the reaction L-threonyl-[protein] + ATP = O-phospho-L-threonyl-[protein] + ADP + H(+). Activated by calcium/calmodulin binding after calcium-induced autophosphorylation. In terms of biological role, calcium- and calmodulin-dependent protein kinase necessary and sufficient for dedifferentiation of root cortical cells into nodule initials. Not required for calcium spiking. Acts as central regulator of the nodule organogenesis program. Required for root hair curling and infection thread (IT) formation upon rhizobial infection, and arbuscule formation during arbuscular mycorrhiza (AM) fungal infection. Phosphorylates the downstream target IPD3, a protein required for root infection by symbiotic rhizobia and AM fungi. Phosphorylates the downstream target CIP73, a protein required for root nodule organogenesis. Mediates the phosphorylation of leghemoglobins (e.g. LB1) to modulate their oxygen O(2) affinity, thus regulating the diffusion of oxygen to the bacteroids in nodules. This Lotus japonicus (Lotus corniculatus var. japonicus) protein is Calcium and calcium/calmodulin-dependent serine/threonine-protein kinase.